We begin with the raw amino-acid sequence, 106 residues long: Small ribosomal subunit protein mS33 (106 aa).

S2 is modified (N-acetylserine). Residues 85–94 (LKKLRGKVKP) show a composition bias toward basic residues. Positions 85–106 (LKKLRGKVKPRKGEGKRAAKKK) are disordered. The segment covering 95 to 106 (RKGEGKRAAKKK) has biased composition (basic and acidic residues).

The protein belongs to the mitochondrion-specific ribosomal protein mS33 family. As to quaternary structure, component of the mitochondrial ribosome small subunit (28S) which comprises a 12S rRNA and about 30 distinct proteins.

The protein localises to the mitochondrion. This Bos taurus (Bovine) protein is Small ribosomal subunit protein mS33.